A 405-amino-acid chain; its full sequence is Solute carrier family 35 member E2A (405 aa).

A disordered region spans residues 1 to 22 (MSAAAKSQVPEEAAPGCEEEPK). Helical transmembrane passes span 76–96 (LIYL…NKYI), 106–126 (MLGA…IFVP), 142–162 (FIMT…LGLV), 167–187 (VAVS…VIMS), 195–215 (TGLL…LCTA), 219–241 (SFNI…QNVF), 264–284 (AAAV…PVIG), 296–316 (IVLL…TAYA), 326–346 (FSVA…IVFG), and 347–367 (NKIT…VLLY). A disordered region spans residues 380–405 (SLVTATSRNPEDDTEPLVPQDSRQHH).

It belongs to the TPT transporter family. SLC35E subfamily.

Its subcellular location is the membrane. In terms of biological role, putative transporter. This is Solute carrier family 35 member E2A (Slc35e2a) from Mus musculus (Mouse).